We begin with the raw amino-acid sequence, 273 residues long: Ribosomal RNA small subunit methyltransferase A (273 aa).

S-adenosyl-L-methionine contacts are provided by N18, L20, G45, E66, D91, and N113.

The protein belongs to the class I-like SAM-binding methyltransferase superfamily. rRNA adenine N(6)-methyltransferase family. RsmA subfamily.

It is found in the cytoplasm. The enzyme catalyses adenosine(1518)/adenosine(1519) in 16S rRNA + 4 S-adenosyl-L-methionine = N(6)-dimethyladenosine(1518)/N(6)-dimethyladenosine(1519) in 16S rRNA + 4 S-adenosyl-L-homocysteine + 4 H(+). Its function is as follows. Specifically dimethylates two adjacent adenosines (A1518 and A1519) in the loop of a conserved hairpin near the 3'-end of 16S rRNA in the 30S particle. May play a critical role in biogenesis of 30S subunits. The sequence is that of Ribosomal RNA small subunit methyltransferase A from Shigella flexneri.